Here is a 145-residue protein sequence, read N- to C-terminus: Methyl-coenzyme M reductase I operon protein D (145 aa).

MCR is composed of three subunits: alpha, beta, and gamma. The function of proteins C and D is not known.

The sequence is that of Methyl-coenzyme M reductase I operon protein D (mcrD) from Methanothermobacter marburgensis (strain ATCC BAA-927 / DSM 2133 / JCM 14651 / NBRC 100331 / OCM 82 / Marburg) (Methanobacterium thermoautotrophicum).